We begin with the raw amino-acid sequence, 360 residues long: Phospho-N-acetylmuramoyl-pentapeptide-transferase (360 aa).

10 consecutive transmembrane segments (helical) span residues 27–47 (GAFMTALIFGFLFGRPLINVL), 71–91 (TPTMGGLLIVGALLTSTLLWA), 93–113 (WDNPFVWMVLFVTLAYALIGF), 134–154 (LALGVIIAVIAALWASYNHPA), 168–188 (TLINLGLLYVPFAICVIVGSA), 199–219 (GLAIMPAMIAASTLGVIAYAV), 239–259 (ILIFTAALFGAGLGFLWYNAP), 262–282 (AVFMGDTGSLALGGALGAIAV), 288–308 (LVLAIVGGLFVVEALSVIIQV), and 337–357 (TIVIRFWIISLILAMIGLATL).

Belongs to the glycosyltransferase 4 family. MraY subfamily. Requires Mg(2+) as cofactor.

The protein localises to the cell inner membrane. It catalyses the reaction UDP-N-acetyl-alpha-D-muramoyl-L-alanyl-gamma-D-glutamyl-meso-2,6-diaminopimeloyl-D-alanyl-D-alanine + di-trans,octa-cis-undecaprenyl phosphate = di-trans,octa-cis-undecaprenyl diphospho-N-acetyl-alpha-D-muramoyl-L-alanyl-D-glutamyl-meso-2,6-diaminopimeloyl-D-alanyl-D-alanine + UMP. The protein operates within cell wall biogenesis; peptidoglycan biosynthesis. Catalyzes the initial step of the lipid cycle reactions in the biosynthesis of the cell wall peptidoglycan: transfers peptidoglycan precursor phospho-MurNAc-pentapeptide from UDP-MurNAc-pentapeptide onto the lipid carrier undecaprenyl phosphate, yielding undecaprenyl-pyrophosphoryl-MurNAc-pentapeptide, known as lipid I. In Ruegeria pomeroyi (strain ATCC 700808 / DSM 15171 / DSS-3) (Silicibacter pomeroyi), this protein is Phospho-N-acetylmuramoyl-pentapeptide-transferase.